Here is a 287-residue protein sequence, read N- to C-terminus: 2-dehydro-3-deoxyphosphooctonate aldolase (287 aa).

Belongs to the KdsA family.

The protein localises to the cytoplasm. It carries out the reaction D-arabinose 5-phosphate + phosphoenolpyruvate + H2O = 3-deoxy-alpha-D-manno-2-octulosonate-8-phosphate + phosphate. Its pathway is carbohydrate biosynthesis; 3-deoxy-D-manno-octulosonate biosynthesis; 3-deoxy-D-manno-octulosonate from D-ribulose 5-phosphate: step 2/3. The protein operates within bacterial outer membrane biogenesis; lipopolysaccharide biosynthesis. This is 2-dehydro-3-deoxyphosphooctonate aldolase from Rhodopseudomonas palustris (strain TIE-1).